Consider the following 40-residue polypeptide: Photosystem II reaction center protein X (40 aa).

Topologically, residues 1–11 (TITPSLKGFFI) are lumenal. The chain crosses the membrane as a helical span at residues 12 to 28 (GLLSGAVVLGLTFAVLI). Topologically, residues 29 to 40 (AISQIDKVQRSL) are cytoplasmic.

The protein belongs to the PsbX family. Type 1 subfamily. PSII is composed of 1 copy each of membrane proteins PsbA, PsbB, PsbC, PsbD, PsbE, PsbF, PsbH, PsbI, PsbJ, PsbK, PsbL, PsbM, PsbT, PsbX, PsbY, PsbZ, Psb30/Ycf12, peripheral proteins PsbO, CyanoQ (PsbQ), PsbU, PsbV and a large number of cofactors. It forms dimeric complexes. Requires PSII binds multiple chlorophylls, carotenoids and specific lipids. as cofactor.

The protein resides in the cellular thylakoid membrane. Involved in the binding and/or turnover of quinones at the Q(B) site of photosystem II (PSII). PSII is a light-driven water plastoquinone oxidoreductase, using light energy to abstract electrons from H(2)O, generating a proton gradient subsequently used for ATP formation. The polypeptide is Photosystem II reaction center protein X (Thermostichus vulcanus (Synechococcus vulcanus)).